The following is a 227-amino-acid chain: Cytochrome c oxidase subunit 2 (227 aa).

The Mitochondrial intermembrane portion of the chain corresponds to 1–14 (MTHPLQLGFQDATS). Residues 15-45 (PIMEELLHFHDHTLMIVFLISSLVLYIITLM) traverse the membrane as a helical segment. The Mitochondrial matrix portion of the chain corresponds to 46–59 (LTTKLTHTSTMDAQ). The helical transmembrane segment at 60 to 87 (EVETVWTILPAIILILIALPSLRILYMM) threads the bilayer. The Mitochondrial intermembrane segment spans residues 88–227 (DEINNPLLTV…YFEDWSVSMT (140 aa)). 6 residues coordinate Cu cation: H161, C196, E198, C200, H204, and M207. E198 lines the Mg(2+) pocket. A Phosphotyrosine modification is found at Y218.

It belongs to the cytochrome c oxidase subunit 2 family. As to quaternary structure, component of the cytochrome c oxidase (complex IV, CIV), a multisubunit enzyme composed of 14 subunits. The complex is composed of a catalytic core of 3 subunits MT-CO1, MT-CO2 and MT-CO3, encoded in the mitochondrial DNA, and 11 supernumerary subunits COX4I, COX5A, COX5B, COX6A, COX6B, COX6C, COX7A, COX7B, COX7C, COX8 and NDUFA4, which are encoded in the nuclear genome. The complex exists as a monomer or a dimer and forms supercomplexes (SCs) in the inner mitochondrial membrane with NADH-ubiquinone oxidoreductase (complex I, CI) and ubiquinol-cytochrome c oxidoreductase (cytochrome b-c1 complex, complex III, CIII), resulting in different assemblies (supercomplex SCI(1)III(2)IV(1) and megacomplex MCI(2)III(2)IV(2)). Found in a complex with TMEM177, COA6, COX18, COX20, SCO1 and SCO2. Interacts with TMEM177 in a COX20-dependent manner. Interacts with COX20. Interacts with COX16. Cu cation is required as a cofactor.

The protein resides in the mitochondrion inner membrane. The catalysed reaction is 4 Fe(II)-[cytochrome c] + O2 + 8 H(+)(in) = 4 Fe(III)-[cytochrome c] + 2 H2O + 4 H(+)(out). Component of the cytochrome c oxidase, the last enzyme in the mitochondrial electron transport chain which drives oxidative phosphorylation. The respiratory chain contains 3 multisubunit complexes succinate dehydrogenase (complex II, CII), ubiquinol-cytochrome c oxidoreductase (cytochrome b-c1 complex, complex III, CIII) and cytochrome c oxidase (complex IV, CIV), that cooperate to transfer electrons derived from NADH and succinate to molecular oxygen, creating an electrochemical gradient over the inner membrane that drives transmembrane transport and the ATP synthase. Cytochrome c oxidase is the component of the respiratory chain that catalyzes the reduction of oxygen to water. Electrons originating from reduced cytochrome c in the intermembrane space (IMS) are transferred via the dinuclear copper A center (CU(A)) of subunit 2 and heme A of subunit 1 to the active site in subunit 1, a binuclear center (BNC) formed by heme A3 and copper B (CU(B)). The BNC reduces molecular oxygen to 2 water molecules using 4 electrons from cytochrome c in the IMS and 4 protons from the mitochondrial matrix. The chain is Cytochrome c oxidase subunit 2 (MT-CO2) from Carlito syrichta (Philippine tarsier).